Reading from the N-terminus, the 1668-residue chain is MMNTLDHRPLGRMETMEGKPDEDEVPTSSNSDAKGKGYYYSSGTVPTDDSTLEEKCQQKTFDPSCPTPKTPVIVPNREFDPNFSTVTENKGWDIFRLLPPKPDRLGHGFWHDASLQVLKLATFLVLFLLTLGSAVVAKSTFILMTSAIGWGGQTITICNQVISEATQNTVKLKNAHVVKWVWATLLALSAPEALCFVRSMHRTMFRNVKRPTFIQFVFVLIIETFHSIGVGILVFRIFPDLDAVTAAQLTNAMCFVPAILSVISRKPNKSALLLVIIDFAAIAAQSSGFWALPMFLPNLQKHLVAIPVSLTLISLAWWQNFVHRDSVFPPVRTLAKFAQRLSERRSKTYAFVSLWKICIYVVCCFLFISSRMKIEDMLQKDPFGEKLLSVAGHDMNQTQIEKFQLRINQMIEQANREAGFYAAAEKKKQPPKKQPKADEAEQVDAGEYMMKRFKRFIGDAGENEEEEPEEEEFSSYNIYSNYVERNQLTMAYDALWLVIFQFGAVFVCYHSSKFACKVMMQRMGFALPMALSVPVTVLLLSTNCRMRQKDSCYGTNVLTVELFWQCNGASMSLADFILTPQTWIWLCWLASQFWITIHLWNPKHERLAKSEKLFILPYYIGAFVDQSLAFNRRRDDKAKIKAEDLEFDAEDSSLTYETIPGLQNKTPPSVCSASSSKLENGLIRDSASSADAITKIYACATMWHETGVEMTCMLKSLFRMDEDQCARRNAQKYLKVIDPDYYEFEAHIFFDDAYDVNEYGEPEINKFVKQIVNVIDQAASAVHQTQMRLKPPKKAKTPYGGKLTYIMPGKNKLFIHLKDNQKIRHRKRWSQVMYLYYLLGYRLMMKVDDPSRKEIISENTFILTLDGDVDFTPSSVYLLVDLMKKNRRLGAACGRIHPRGDGAMVWYQKFEYAIGHWLQKATEHMIGCVMCSPGCFSLFRAYALMDDNVARRYALKSEEPKHFIQYDQGEDRWLCTLLLQRGYRVEYCAASDAQTFAPEGFNEFFNQRRRWIPSTIFNIMDLLKDYRNVVRVNESISIWYIIYQLVMLISSILGPGTIFVMIIGAISISFSIDTLISLVIVSIPVVVFIVVCLTAKPEHQLICAQTIGAIFAMLMTAVVVGTSLQLQKDGLLSPHSMFTVAVATSFLTAAILHPLEFTCIIPGTIYFLAIPCMYMLLPIYSVCNMHTVSWGTREDPRPTEKNTLAKKTPGNLESGDGAGNSENWCTRFLCCGRGTVHPMTMVINEKLNEVIKKVDRLDRKHHPSLARRASILSSTGGTIQIDKCSEADEDEQAEIEDALEMSNQSHAAKKNQKWKQAQSEAWLADKALKRAEREYLEPEEESFWNDVIERYLSPLIMDGKDMDRLRAGLIAIRNSHTVYFLMINIVFIISVLVLQIHKDCLNIEWPLGPKFNHTVRPCYANHDDNQKEEVWVMTRLQLEPIGLVFLIFFVSILVIQFLAMLCHRFGTLAHIIASTELFCFRKTMDRLSEDELVAQNAVEIARELQAIRGIDENAHNIDNPTEDRGISRRRVVQNLESSRKSMMKRKTETLDAAFKKRFFALSSEQTPDPAGFSARDNSKRLTLRKGTIRALEHRRDSLFGTLDNRKDDEVDATSMRGPAQRRLERLFTAQQDQNSPTSDGNRRKSNSRPWDQPTSSATSSGDVELRRF.

The span at 1–19 (MMNTLDHRPLGRMETMEGK) shows a compositional bias: basic and acidic residues. Residues 1-51 (MMNTLDHRPLGRMETMEGKPDEDEVPTSSNSDAKGKGYYYSSGTVPTDDST) form a disordered region. The Cytoplasmic segment spans residues 1 to 116 (MMNTLDHRPL…HGFWHDASLQ (116 aa)). Residues 117–137 (VLKLATFLVLFLLTLGSAVVA) form a helical membrane-spanning segment. Residues 138 to 176 (KSTFILMTSAIGWGGQTITICNQVISEATQNTVKLKNAH) lie on the Extracellular side of the membrane. A helical transmembrane segment spans residues 177 to 197 (VVKWVWATLLALSAPEALCFV). Residues 198 to 212 (RSMHRTMFRNVKRPT) lie on the Cytoplasmic side of the membrane. Residues 213–233 (FIQFVFVLIIETFHSIGVGIL) form a helical membrane-spanning segment. At 234–242 (VFRIFPDLD) the chain is on the extracellular side. Residues 243-263 (AVTAAQLTNAMCFVPAILSVI) traverse the membrane as a helical segment. Over 264–271 (SRKPNKSA) the chain is Cytoplasmic. The chain crosses the membrane as a helical span at residues 272–292 (LLLVIIDFAAIAAQSSGFWAL). Residues 293 to 301 (PMFLPNLQK) are Extracellular-facing. The chain crosses the membrane as a helical span at residues 302-322 (HLVAIPVSLTLISLAWWQNFV). Residues 323–347 (HRDSVFPPVRTLAKFAQRLSERRSK) are Cytoplasmic-facing. Residues 348–368 (TYAFVSLWKICIYVVCCFLFI) form a helical membrane-spanning segment. Topologically, residues 369 to 487 (SSRMKIEDML…IYSNYVERNQ (119 aa)) are extracellular. Asn-396 carries an N-linked (GlcNAc...) asparagine glycan. A helical membrane pass occupies residues 488–508 (LTMAYDALWLVIFQFGAVFVC). Topologically, residues 509–522 (YHSSKFACKVMMQR) are cytoplasmic. A helical membrane pass occupies residues 523 to 543 (MGFALPMALSVPVTVLLLSTN). Residues 544-576 (CRMRQKDSCYGTNVLTVELFWQCNGASMSLADF) lie on the Extracellular side of the membrane. A helical transmembrane segment spans residues 577-597 (ILTPQTWIWLCWLASQFWITI). Residues 598 to 1045 (HLWNPKHERL…ISIWYIIYQL (448 aa)) are Cytoplasmic-facing. A helical membrane pass occupies residues 1046-1066 (VMLISSILGPGTIFVMIIGAI). At 1067–1074 (SISFSIDT) the chain is on the extracellular side. Residues 1075-1095 (LISLVIVSIPVVVFIVVCLTA) form a helical membrane-spanning segment. At 1096–1100 (KPEHQ) the chain is on the cytoplasmic side. The helical transmembrane segment at 1101–1121 (LICAQTIGAIFAMLMTAVVVG) threads the bilayer. Over 1122–1136 (TSLQLQKDGLLSPHS) the chain is Extracellular. The helical transmembrane segment at 1137–1157 (MFTVAVATSFLTAAILHPLEF) threads the bilayer. Position 1158 (Thr-1158) is a topological domain, cytoplasmic. Residues 1159-1179 (CIIPGTIYFLAIPCMYMLLPI) traverse the membrane as a helical segment. Residues 1180-1375 (YSVCNMHTVS…RAGLIAIRNS (196 aa)) are Extracellular-facing. Residues 1192-1216 (TREDPRPTEKNTLAKKTPGNLESGD) form a disordered region. Residues 1280–1335 (QIDKCSEADEDEQAEIEDALEMSNQSHAAKKNQKWKQAQSEAWLADKALKRAEREY) adopt a coiled-coil conformation. Asn-1303 is a glycosylation site (N-linked (GlcNAc...) asparagine). Residues 1376–1396 (HTVYFLMINIVFIISVLVLQI) form a helical membrane-spanning segment. Residues 1397-1440 (HKDCLNIEWPLGPKFNHTVRPCYANHDDNQKEEVWVMTRLQLEP) are Cytoplasmic-facing. The chain crosses the membrane as a helical span at residues 1441 to 1461 (IGLVFLIFFVSILVIQFLAML). The Extracellular portion of the chain corresponds to 1462–1668 (CHRFGTLAHI…SSGDVELRRF (207 aa)). The interval 1625–1668 (RLFTAQQDQNSPTSDGNRRKSNSRPWDQPTSSATSSGDVELRRF) is disordered. 2 stretches are compositionally biased toward polar residues: residues 1628–1639 (TAQQDQNSPTSD) and 1647–1661 (SRPWDQPTSSATSSG).

It belongs to the chitin synthase family. Class IV subfamily.

The protein resides in the cell membrane. It catalyses the reaction [(1-&gt;4)-N-acetyl-beta-D-glucosaminyl](n) + UDP-N-acetyl-alpha-D-glucosamine = [(1-&gt;4)-N-acetyl-beta-D-glucosaminyl](n+1) + UDP + H(+). May be involved in chitin synthesis in the pharynx during larval development. The chain is Chitin synthase chs-2 from Caenorhabditis elegans.